The following is a 358-amino-acid chain: Cyclin-dependent kinase 11 (358 aa).

Positions 52-336 (FKKLYTINEG…ASDALKHPYF (285 aa)) constitute a Protein kinase domain. Residues 58-66 (INEGAFGVV) and lysine 81 contribute to the ATP site. Catalysis depends on aspartate 176, which acts as the Proton acceptor.

Belongs to the protein kinase superfamily. CMGC Ser/Thr protein kinase family. CDC2/CDKX subfamily.

It catalyses the reaction L-seryl-[protein] + ATP = O-phospho-L-seryl-[protein] + ADP + H(+). It carries out the reaction L-threonyl-[protein] + ATP = O-phospho-L-threonyl-[protein] + ADP + H(+). In Dictyostelium discoideum (Social amoeba), this protein is Cyclin-dependent kinase 11 (cdk11).